The following is a 390-amino-acid chain: Levoglucosan dehydrogenase (390 aa).

The NADH site is built by Phe13, Met14, Glu43, Thr81, Asn83, His86, Glu103, Lys104, Ala130, and Asn132. Levoglucosan is bound at residue Lys104. Levoglucosan is bound by residues Tyr133 and Gln163. NADH is bound by residues Trp175 and Arg176. Levoglucosan contacts are provided by Arg176, Asp189, and His193. Tyr335 serves as a coordination point for NADH.

Belongs to the Gfo/Idh/MocA family. Homotetramer.

The catalysed reaction is levoglucosan + NAD(+) = 3-dehydrolevoglucosan + NADH + H(+). In terms of biological role, catalyzes the oxidation of levoglucosan (1,6-anhydro-beta-D-glucose, LG) to 3-dehydrolevoglucosan (3-keto-LG). Exhibits high substrate specificity toward levoglucosan and NAD(+) for the oxidative reaction. Exhibits weak activities (about 4% compared with that of LG) toward L-sorbose and 1,5-anhydro-D-glucitol, and activity toward D-xylose is also detectable (1.7%). Can also efficiently catalyzes the NADH-dependent reduction (reverse reaction) of 3-keto-LG. The sequence is that of Levoglucosan dehydrogenase from Pseudarthrobacter phenanthrenivorans (strain DSM 18606 / JCM 16027 / LMG 23796 / Sphe3) (Arthrobacter phenanthrenivorans).